A 1320-amino-acid polypeptide reads, in one-letter code: Sal-like protein 3 (1320 aa).

The segment covering 1–11 (MSRRKQAKPQH) has biased composition (basic residues). The tract at residues 1–49 (MSRRKQAKPQHLKSDEELPPQDGASEHGVPGDGAEDADSGSESRSGSEE) is disordered. Low complexity predominate over residues 40 to 49 (GSESRSGSEE). The C2H2-type 1; atypical zinc finger occupies 51 to 73 (SVCEKCCAEFFKWADFLQHKKTC). Disordered stretches follow at residues 84 to 166 (DDEP…AFSM) and 271 to 367 (LSAG…NLPN). A compositionally biased stretch (pro residues) spans 88 to 100 (APPSEDFPEPSPA). A Phosphoserine modification is found at S109. Positions 121–131 (SEVKAATKEAE) are enriched in basic and acidic residues. The span at 143–160 (PPGPSVPPPPPALPPQPE) shows a compositional bias: pro residues. Residues 271–289 (LSAGPATASAGSGSTLPAA) are compositionally biased toward low complexity. The span at 295–311 (HLSQPASGTSTPCSTSA) shows a compositional bias: polar residues. Low complexity-rich tracts occupy residues 323-342 (STGP…GNAV) and 355-367 (PGPL…NLPN). 2 C2H2-type zinc fingers span residues 427–449 (HKCR…LRSH) and 455–477 (FKCN…FQRH). The disordered stretch occupies residues 534–623 (GLQLPPTVPG…RTGDAPVVGG (90 aa)). Residues 543–554 (GTHNYTDSPSIT) are compositionally biased toward polar residues. Residues 555–568 (PVSRSPQRPSPASS) are compositionally biased toward low complexity. The segment covering 569–583 (ECTSLSPGLNNTESG) has biased composition (polar residues). 3 C2H2-type zinc fingers span residues 692 to 714 (NQCV…YRTH), 720 to 742 (FKCK…FGVH), and 752 to 774 (HSCP…IRMH). 2 disordered regions span residues 807 to 846 (SSFD…PPSP) and 878 to 972 (VENG…GHPG). The span at 809–823 (FDDDIDENSMEEDSE) shows a compositional bias: acidic residues. 2 stretches are compositionally biased toward low complexity: residues 834–846 (PLLS…PPSP) and 902–923 (RSAG…PAHS). S932 is subject to Phosphoserine. 4 consecutive C2H2-type zinc fingers follow at residues 997-1019 (TVCG…YRSH), 1025-1047 (FVCT…LLTH), 1133-1155 (HNCQ…ERTH), and 1161-1183 (FGCT…MGTH). S1197 is modified (phosphoserine).

Belongs to the sal C2H2-type zinc-finger protein family. As to expression, in adult brain, testis and kidney. In lower levels also in adult ovaries and embryonic stem cells. In embryo in developing neuroectoderm of brain, inner ear and spinal cord. Also weakly and transiently expressed in embryonic branchial arches, notochord, limb buds and heart.

The protein resides in the nucleus. In terms of biological role, probable transcription factor. The protein is Sal-like protein 3 (Sall3) of Mus musculus (Mouse).